The sequence spans 707 residues: Caprin-1 (707 aa).

Low complexity-rich tracts occupy residues 1–15 (MPSA…SKSS) and 22–43 (GSSG…PATG). The segment at 1–48 (MPSATSHSGSGSKSSGPPPPSGSSGSEAAAGAAAPASQHPATGTGAVQ) is disordered. Position 2 is an N-acetylproline (P2). S10 carries the phosphoserine modification. Residues 58–92 (VIDKKLRNLEKKKGKLDDYQERMNKGERLNQDQLD) are a coiled coil. S113 carries the post-translational modification Phosphoserine. Residues 123–151 (KTIKKTARREQLMREEAEQKRLKTVLELQ) are a coiled coil. R163 carries the post-translational modification Omega-N-methylarginine. Residues 325–335 (LQQQPQAASPS) are compositionally biased toward low complexity. The disordered stretch occupies residues 325–347 (LQQQPQAASPSVPEPHSLTPVAQ). A phosphoserine mark is found at S333 and S341. Positions 358–379 (QDLMAQMQGPYNFIQDSMLDFE) are G3BP1-binding. Disordered regions lie at residues 412 to 496 (ESRL…AGTS), 526 to 558 (PANE…EQTE), and 570 to 707 (TYHG…QQVN). The span at 431–452 (PLVSSTSEGYTASQPLYQPSHA) shows a compositional bias: polar residues. Positions 453-462 (TEQRPQKEPM) are enriched in basic and acidic residues. Residues 465 to 474 (IQATISLNTD) are compositionally biased toward polar residues. Over residues 475–489 (QTTASSSLPAASQPQ) the composition is skewed to low complexity. Polar residues-rich tracts occupy residues 533 to 552 (LKQQ…SQPH) and 572 to 603 (HGSQ…QPYY). Y623 is subject to Phosphotyrosine. An omega-N-methylarginine mark is found at R624 and R631. Residues Y634 and Y637 each carry the phosphotyrosine modification. R638 is subject to Omega-N-methylarginine. The segment covering 640–655 (SFSNTPNSGYSQSQFT) has biased composition (polar residues). Residues S642 and S647 are each glycosylated (O-linked (GlcNAc) serine). Y649, Y660, Y663, and Y668 each carry phosphotyrosine. Composition is skewed to low complexity over residues 674–684 (RGSGQSGPRGA) and 695–707 (NRGM…QQVN). Asymmetric dimethylarginine; alternate is present on R696. Omega-N-methylarginine; alternate is present on R696.

This sequence belongs to the caprin family. In terms of assembly, may form homomultimers. Interacts with G3BP1; interaction is direct and promotes stress granule formation. Interacts with G3BP2; interaction is direct and promotes stress granule formation. Interacts with PQBP1. Interacts with DDX3X. Interacts (when phosphorylated by EPHA4) with FMR1; interaction with FMR1 promotes formation of a membraneless compartment. Post-translationally, tyrosine phosphorylation by EPHA4 promotes interaction with FMR1 and liquid-liquid phase separation (LLPS) for the formation of a membraneless compartment that concentrates mRNAs with associated regulatory factors. O-glycosylated (O-GlcNAcylated), in a cell cycle-dependent manner. O-glycosylation by OGT inhibit ability to undergo liquid-liquid phase separation (LLPS). In terms of tissue distribution, highest expression in thymus, spleen and brain (at protein level). Lower levels in kidney, muscle and liver (at protein level).

The protein resides in the cytoplasm. Its subcellular location is the cytoplasmic ribonucleoprotein granule. It is found in the cytosol. The protein localises to the cell projection. It localises to the dendrite. The protein resides in the lamellipodium. With respect to regulation, ability to mediate liquid-liquid phase separation is regulated by ATP: moderate concentrations of ATP enhance phase separation, whereas high concentrations of ATP lead to inhibition of phase separation. Functionally, mRNA-binding protein that acts as a regulator of mRNAs transport, translation and/or stability, and which is involved in neurogenesis, synaptic plasticity in neurons and cell proliferation and migration in multiple cell types. Plays an essential role in cytoplasmic stress granule formation. Acts as an mRNA regulator by mediating formation of some phase-separated membraneless compartment: undergoes liquid-liquid phase separation upon binding to target mRNAs, leading to assemble mRNAs into cytoplasmic ribonucleoprotein granules that concentrate mRNAs with associated regulatory factors. Undergoes liquid-liquid phase separation following phosphorylation and interaction with FMR1, promoting formation of cytoplasmic ribonucleoprotein granules that concentrate mRNAs with factors that inhibit translation and mediate deadenylation of target mRNAs. In these cytoplasmic ribonucleoprotein granules, CAPRIN1 mediates recruitment of CNOT7 deadenylase, leading to mRNA deadenylation and degradation. Binds directly and selectively to MYC and CCND2 mRNAs. In neuronal cells, directly binds to several mRNAs associated with RNA granules, including BDNF, CAMK2A, CREB1, MAP2, NTRK2 mRNAs, as well as to GRIN1 and KPNB1 mRNAs, but not to rRNAs. This chain is Caprin-1 (Caprin1), found in Mus musculus (Mouse).